A 283-amino-acid polypeptide reads, in one-letter code: Pantothenate synthetase (283 aa).

Residue 30–37 (MGYLHEGH) participates in ATP binding. Catalysis depends on histidine 37, which acts as the Proton donor. Glutamine 61 contacts (R)-pantoate. Glutamine 61 contacts beta-alanine. 147–150 (GLKD) provides a ligand contact to ATP. Glutamine 153 provides a ligand contact to (R)-pantoate. ATP contacts are provided by residues valine 176 and 184-187 (KSSR).

It belongs to the pantothenate synthetase family. In terms of assembly, homodimer.

It is found in the cytoplasm. The enzyme catalyses (R)-pantoate + beta-alanine + ATP = (R)-pantothenate + AMP + diphosphate + H(+). The protein operates within cofactor biosynthesis; (R)-pantothenate biosynthesis; (R)-pantothenate from (R)-pantoate and beta-alanine: step 1/1. Functionally, catalyzes the condensation of pantoate with beta-alanine in an ATP-dependent reaction via a pantoyl-adenylate intermediate. This Halalkalibacterium halodurans (strain ATCC BAA-125 / DSM 18197 / FERM 7344 / JCM 9153 / C-125) (Bacillus halodurans) protein is Pantothenate synthetase.